Consider the following 591-residue polypeptide: Aspartate--tRNA ligase (591 aa).

Glu176 is an L-aspartate binding site. Residues 200–203 are aspartate; sequence QILK. Arg222 is an L-aspartate binding site. Residues 222–224 and Gln231 each bind ATP; that span reads RDE. L-aspartate is bound at residue His450. Glu484 is a binding site for ATP. L-aspartate is bound at residue Arg491. 536–539 lines the ATP pocket; that stretch reads GLDR.

The protein belongs to the class-II aminoacyl-tRNA synthetase family. Type 1 subfamily. In terms of assembly, homodimer.

Its subcellular location is the cytoplasm. It carries out the reaction tRNA(Asp) + L-aspartate + ATP = L-aspartyl-tRNA(Asp) + AMP + diphosphate. In terms of biological role, catalyzes the attachment of L-aspartate to tRNA(Asp) in a two-step reaction: L-aspartate is first activated by ATP to form Asp-AMP and then transferred to the acceptor end of tRNA(Asp). The polypeptide is Aspartate--tRNA ligase (Listeria monocytogenes serovar 1/2a (strain ATCC BAA-679 / EGD-e)).